The sequence spans 674 residues: DNA ligase (674 aa).

NAD(+)-binding positions include 31 to 35 (DYEYD), 80 to 81 (SL), and E110. K112 (N6-AMP-lysine intermediate) is an active-site residue. Residues R133, E167, K283, and K307 each contribute to the NAD(+) site. 4 residues coordinate Zn(2+): C401, C404, C419, and C424. The 90-residue stretch at 584-673 (KVEKIFEGMK…SKDEVKAVLE (90 aa)) folds into the BRCT domain.

It belongs to the NAD-dependent DNA ligase family. LigA subfamily. Mg(2+) is required as a cofactor. Mn(2+) serves as cofactor.

The catalysed reaction is NAD(+) + (deoxyribonucleotide)n-3'-hydroxyl + 5'-phospho-(deoxyribonucleotide)m = (deoxyribonucleotide)n+m + AMP + beta-nicotinamide D-nucleotide.. Its function is as follows. DNA ligase that catalyzes the formation of phosphodiester linkages between 5'-phosphoryl and 3'-hydroxyl groups in double-stranded DNA using NAD as a coenzyme and as the energy source for the reaction. It is essential for DNA replication and repair of damaged DNA. The polypeptide is DNA ligase (Clostridioides difficile (strain 630) (Peptoclostridium difficile)).